The sequence spans 200 residues: MNAMFHSLFALSFVSLVASINNQNSRYDKMFLAMVCQDQNGCEVNIRFLKQSFPDSNSTEPLYEHTMIYNNGSLDEITIDVTEDVNIIEFTFTAPDENGTTIVETDSWELNFSETYFHTIGSLQLVGNLPCGRYGCPQTPLCNGSCRFMVIVSLAAFCISVLAGLALQTVYVSFLGFRKTRKAVELRDTLRLTEAAELAH.

The N-terminal stretch at 1–19 (MNAMFHSLFALSFVSLVAS) is a signal peptide. A helical transmembrane segment spans residues 148 to 168 (FMVIVSLAAFCISVLAGLALQ).

It is found in the membrane. This is an uncharacterized protein from Caenorhabditis elegans.